Reading from the N-terminus, the 81-residue chain is MQPSQIIAIAALVVAAIIAIVVWTIVFIEYRRIKRQRKIDCIIDRIRERAEDSGNESEGDREELSKLVEMGHHAPWDIDDL.

Residues 1–7 (MQPSQII) are Extracellular-facing. Residues 8–28 (AIAALVVAAIIAIVVWTIVFI) form a helical membrane-spanning segment. Topologically, residues 29-81 (EYRRIKRQRKIDCIIDRIRERAEDSGNESEGDREELSKLVEMGHHAPWDIDDL) are cytoplasmic. A phosphoserine; by host CK2 mark is found at Ser-53 and Ser-57.

The protein belongs to the HIV-1 VPU protein family. As to quaternary structure, homopentamer. Interacts with host CD4 and BRTC; these interactions induce proteasomal degradation of CD4. Interacts with host BST2; this interaction leads to the degradation of host BST2. Interacts with host FBXW11. Interacts with host AP1M1; this interaction plays a role in the mistrafficking and subsequent degradation of host BST2. Interacts with host RANBP2; this interaction allows Vpu to down-regulate host BLM sumoylation. In terms of processing, phosphorylated by host CK2. This phosphorylation is necessary for interaction with human BTRC and degradation of CD4.

The protein resides in the host membrane. Ion channel activity is inhibited by hexamethylene amiloride in vitro. Functionally, enhances virion budding by targeting host CD4 and Tetherin/BST2 to proteasome degradation. Degradation of CD4 prevents any unwanted premature interactions between viral Env and its host receptor CD4 in the endoplasmic reticulum. Degradation of antiretroviral protein Tetherin/BST2 is important for virion budding, as BST2 tethers new viral particles to the host cell membrane. Mechanistically, Vpu bridges either CD4 or BST2 to BTRC, a substrate recognition subunit of the Skp1/Cullin/F-box protein E3 ubiquitin ligase, induces their ubiquitination and subsequent proteasomal degradation. The alteration of the E3 ligase specificity by Vpu seems to promote the degradation of host IKBKB, leading to NF-kappa-B down-regulation and subsequent apoptosis. Acts as a viroporin that forms an oligomeric ion channel in membranes. Modulates the host DNA repair mechanisms to promote degradation of nuclear viral cDNA in cells that are already productively infected in order to suppress immune sensing and proviral hyper-integration (superinfection). Manipulates PML-NBs and modulates SUMOylation of host BLM protein thereby enhancing its DNA-end processing activity toward viral unintegrated linear DNA. Also inhibits RAD52-mediated homologous repair of viral cDNA, preventing the generation of dead-end circular forms of single copies of the long terminal repeat and permitting sustained nucleolytic attack. The protein is Protein Vpu of Homo sapiens (Human).